The primary structure comprises 270 residues: Acetylglutamate kinase (270 aa).

Substrate contacts are provided by residues 41–42, Arg-63, and Asn-166; that span reads GG.

It belongs to the acetylglutamate kinase family. ArgB subfamily.

It is found in the cytoplasm. The enzyme catalyses N-acetyl-L-glutamate + ATP = N-acetyl-L-glutamyl 5-phosphate + ADP. It functions in the pathway amino-acid biosynthesis; L-arginine biosynthesis; N(2)-acetyl-L-ornithine from L-glutamate: step 2/4. In terms of biological role, catalyzes the ATP-dependent phosphorylation of N-acetyl-L-glutamate. In Anaeromyxobacter dehalogenans (strain 2CP-C), this protein is Acetylglutamate kinase.